The sequence spans 61 residues: Photosystem II reaction center protein K (61 aa).

A propeptide spanning residues 1–24 (MLNIFSLICICINSALHSSSFFFA) is cleaved from the precursor. Residues 40 to 60 (MPVIPVLFFLLALVWQAAVSF) traverse the membrane as a helical segment.

Belongs to the PsbK family. As to quaternary structure, PSII is composed of 1 copy each of membrane proteins PsbA, PsbB, PsbC, PsbD, PsbE, PsbF, PsbH, PsbI, PsbJ, PsbK, PsbL, PsbM, PsbT, PsbX, PsbY, PsbZ, Psb30/Ycf12, at least 3 peripheral proteins of the oxygen-evolving complex and a large number of cofactors. It forms dimeric complexes.

It localises to the plastid. The protein resides in the chloroplast thylakoid membrane. Its function is as follows. One of the components of the core complex of photosystem II (PSII). PSII is a light-driven water:plastoquinone oxidoreductase that uses light energy to abstract electrons from H(2)O, generating O(2) and a proton gradient subsequently used for ATP formation. It consists of a core antenna complex that captures photons, and an electron transfer chain that converts photonic excitation into a charge separation. The sequence is that of Photosystem II reaction center protein K from Liriodendron tulipifera (Tuliptree).